The chain runs to 405 residues: Sesquiterpene synthase 16 (405 aa).

Mg(2+) is bound by residues D155, D159, and E309. The short motif at 155-159 is the DDXXD motif element; it reads DDTYD.

This sequence belongs to the terpene synthase family. Tpsa subfamily. The cofactor is Mg(2+). Mn(2+) is required as a cofactor.

Its pathway is secondary metabolite biosynthesis; terpenoid biosynthesis. Its function is as follows. Sesquiterpene synthase involved in the biosynthesis of volatile compounds. No activity detected with geranyl diphosphate (GPP) and farnesyl diphosphate (FPP) as substrates. The sequence is that of Sesquiterpene synthase 16 from Solanum habrochaites (Wild tomato).